A 366-amino-acid polypeptide reads, in one-letter code: Dual-specificity RNA methyltransferase RlmN (366 aa).

The Proton acceptor role is filled by E102. Residues 108–340 enclose the Radical SAM core domain; the sequence is DEGRNTLCVS…TTTRKTRGRD (233 aa). A disulfide bridge links C115 with C345. [4Fe-4S] cluster-binding residues include C122, C126, and C129. Residues 171-172, S203, 225-227, and N302 each bind S-adenosyl-L-methionine; these read GE and SLH. C345 acts as the S-methylcysteine intermediate in catalysis.

It belongs to the radical SAM superfamily. RlmN family. Requires [4Fe-4S] cluster as cofactor.

The protein localises to the cytoplasm. The enzyme catalyses adenosine(2503) in 23S rRNA + 2 reduced [2Fe-2S]-[ferredoxin] + 2 S-adenosyl-L-methionine = 2-methyladenosine(2503) in 23S rRNA + 5'-deoxyadenosine + L-methionine + 2 oxidized [2Fe-2S]-[ferredoxin] + S-adenosyl-L-homocysteine. The catalysed reaction is adenosine(37) in tRNA + 2 reduced [2Fe-2S]-[ferredoxin] + 2 S-adenosyl-L-methionine = 2-methyladenosine(37) in tRNA + 5'-deoxyadenosine + L-methionine + 2 oxidized [2Fe-2S]-[ferredoxin] + S-adenosyl-L-homocysteine. Functionally, specifically methylates position 2 of adenine 2503 in 23S rRNA and position 2 of adenine 37 in tRNAs. m2A2503 modification seems to play a crucial role in the proofreading step occurring at the peptidyl transferase center and thus would serve to optimize ribosomal fidelity. This is Dual-specificity RNA methyltransferase RlmN from Methylococcus capsulatus (strain ATCC 33009 / NCIMB 11132 / Bath).